The following is a 459-amino-acid chain: Biphenyl dioxygenase subunit alpha (459 aa).

One can recognise a Rieske domain in the interval 58-156 (WLLLGHESHV…KEGDCGFDKA (99 aa)). Residues Cys-100, His-102, Cys-120, and His-123 each contribute to the [2Fe-2S] cluster site. Positions 233 and 239 each coordinate Fe cation.

It belongs to the bacterial ring-hydroxylating dioxygenase alpha subunit family. In terms of assembly, heterohexamer consisting of three BphA subunits and three BphE subunits. A ferredoxin (BphF) and a ferredoxin reductase (BphG) must be present to obtain activity. [2Fe-2S] cluster serves as cofactor. Requires Fe cation as cofactor.

It catalyses the reaction biphenyl + NADH + O2 + H(+) = (2R,3S)-3-phenylcyclohexa-3,5-diene-1,2-diol + NAD(+). It participates in xenobiotic degradation; biphenyl degradation; 2-hydroxy-2,4-pentadienoate and benzoate from biphenyl: step 1/4. This Paraburkholderia xenovorans (strain LB400) protein is Biphenyl dioxygenase subunit alpha (bphA).